A 122-amino-acid chain; its full sequence is Small ribosomal subunit protein uS13 (122 aa).

The tract at residues 99-122 is disordered; sequence RGQRTHTNARTRKGPAKAIAGKKK.

It belongs to the universal ribosomal protein uS13 family. As to quaternary structure, part of the 30S ribosomal subunit. Forms a loose heterodimer with protein S19. Forms two bridges to the 50S subunit in the 70S ribosome.

Functionally, located at the top of the head of the 30S subunit, it contacts several helices of the 16S rRNA. In the 70S ribosome it contacts the 23S rRNA (bridge B1a) and protein L5 of the 50S subunit (bridge B1b), connecting the 2 subunits; these bridges are implicated in subunit movement. Contacts the tRNAs in the A and P-sites. The polypeptide is Small ribosomal subunit protein uS13 (Bradyrhizobium sp. (strain BTAi1 / ATCC BAA-1182)).